Reading from the N-terminus, the 804-residue chain is DNA mismatch repair protein MutS (804 aa).

614–621 (GPNMAGKS) contributes to the ATP binding site.

The protein belongs to the DNA mismatch repair MutS family.

Functionally, this protein is involved in the repair of mismatches in DNA. It is possible that it carries out the mismatch recognition step. This protein has a weak ATPase activity. The chain is DNA mismatch repair protein MutS from Ehrlichia ruminantium (strain Welgevonden).